The sequence spans 113 residues: U11-theraphotoxin-Hhn1m (113 aa).

A signal peptide spans 1-21; it reads MNTVRGTFLLVFGLAASLGQA. Residues 22–74 constitute a propeptide that is removed on maturation; that stretch reads DKNENRREMQKKTEQGKSYLNFAENLLLQKLEELEAKLLEKHSKKSKNSRQKR. 3 disulfides stabilise this stretch: cysteine 75–cysteine 90, cysteine 82–cysteine 95, and cysteine 89–cysteine 110.

It belongs to the neurotoxin 14 (magi-1) family. 01 (HNTX-16) subfamily. Expressed by the venom gland.

The protein resides in the secreted. Its function is as follows. Probable ion channel inhibitor. This is U11-theraphotoxin-Hhn1m from Cyriopagopus hainanus (Chinese bird spider).